A 2332-amino-acid polypeptide reads, in one-letter code: Genome polyprotein (2332 aa).

One can recognise a Peptidase C28 domain in the interval 1–201; sequence MNTTDCFIAL…WKAKVQRKLK (201 aa). Over 1-1480 the chain is Cytoplasmic; that stretch reads MNTTDCFIAL…SFVKRAFKRL (1480 aa). Catalysis depends on for leader protease activity residues Cys51, His148, and Asp163. 2 disordered regions span residues 197-218 and 238-265; these read QRKLKGAGQSSPATGSQNQSGN and QLGDNAISGGSNEGSTDTTSTHTTNTQN. A lipid anchor (N-myristoyl glycine; by host) is attached at Gly202. Composition is skewed to polar residues over residues 204–218 and 238–251; these read GQSSPATGSQNQSGN and QLGDNAISGGSNEG. Low complexity predominate over residues 252–265; sequence STDTTSTHTTNTQN. A disulfide bridge links Cys406 with Cys858. The interval 788 to 796 is antigenic epitope; sequence ALLRASTYY. The short motif at 869-871 is the Cell attachment site element; sequence RGD. The SF3 helicase domain maps to 1189–1353; it reads NVHIANLCKV…DGYKINSKLD (165 aa). Residue 1217–1224 participates in ATP binding; that stretch reads GKSGQGKS. An intramembrane segment occupies 1481-1501; it reads KENFEIVALCLTLLANIVIMI. At 1502–2332 the chain is on the cytoplasmic side; that stretch reads RETRKRQKMV…RWVNAVCGDA (831 aa). Residues 1529-1538 show a composition bias toward basic and acidic residues; the sequence is KTLDEAEKSP. The segment at 1529-1584 is disordered; it reads KTLDEAEKSPLETSGASTVGFRERTLPGQKACDDVNSEPAQPVEEQPQAEGPYAGP. An O-(5'-phospho-RNA)-tyrosine mark is found at Tyr1581, Tyr1604, and Tyr1628. In terms of domain architecture, Peptidase C3 spans 1652-1848; the sequence is APPTDLQKMV…YCSCVSRSML (197 aa). Catalysis depends on His1695, which acts as the For protease 3C activity; Proton donor/acceptor. Catalysis depends on for protease 3C activity residues Asp1733 and Cys1812. Short sequence motifs (nuclear localization signal) lie at residues 1878–1886 and 1879–1886; these read MRKTKLAPT and RKTKLAPT. The region spanning 2096 to 2214 is the RdRp catalytic domain; the sequence is RNVWDVDYSA…ASDYDLDFEA (119 aa). Residue Asp2200 is the For RdRp activity of the active site.

Belongs to the picornaviruses polyprotein family. As to quaternary structure, interacts with host ISG15. In terms of assembly, interacts (via R-G-D motif) with host ITGAV/ITGB6. Interacts with host MAVS; this interaction inhibits binding of host TRAF3 to MAVS, thereby suppressing interferon-mediated responses. Forms homooligomers. As to quaternary structure, homohexamer. Interacts with host VIM. Interacts with host BECN1. In terms of assembly, interacts with host DCTN3. Interacts with RNA-dependent RNA polymerase; this interaction allows 3B-1 to binds 2 polymerases and act as a primer. It also allows the recruitment of the RNA-dependent RNA polymerase to host membranes. As to quaternary structure, interacts with RNA-dependent RNA polymerase; this interaction allows 3B-2 to act as a primer. In terms of assembly, interacts with RNA-dependent RNA polymerase; this interaction allows 3B-3 to act as a primer. Interacts with 3B-1; this interaction allows 3B-1 to binds 2 polymerases and act as a primer. It also allows the recruitment of the RNA-dependent RNA polymerase to host membranes. Interacts with 3B-2; this interaction allows 3B-2 to act as a primer. Interacts with 3B-3; this interaction allows 3B-3 to act as a primer. In terms of processing, removes six residues from its own C-terminus, generating sLb(pro). Specific enzymatic cleavages in vivo by the viral proteases yield a variety of precursors and mature proteins. The polyprotein seems to be cotranslationally cleaved at the 2A/2B junction by a ribosomal skip from one codon to the next without formation of a peptide bond. This process would release the L-P1-2A peptide from the translational complex. Post-translationally, during virion maturation, immature virions are rendered infectious following cleavage of VP0 into VP4 and VP2. This maturation seems to be an autocatalytic event triggered by the presence of RNA in the capsid and is followed by a conformational change of the particle. In terms of processing, myristoylation is required during RNA encapsidation and formation of the mature virus particle. Uridylylated by the polymerase and covalently linked to the 5'-end of genomic RNA. These uridylylated forms act as a nucleotide-peptide primer for the polymerase. Post-translationally, the disulfide bond between VP1 and VP2 occurs after release of virus from the host cell.

The protein localises to the host nucleus. It localises to the host cytoplasm. The protein resides in the virion. Its subcellular location is the host endoplasmic reticulum membrane. It is found in the host cytoplasmic vesicle membrane. The catalysed reaction is Autocatalytically cleaves itself from the polyprotein of the foot-and-mouth disease virus by hydrolysis of a Lys-|-Gly bond, but then cleaves host cell initiation factor eIF-4G at bonds -Gly-|-Arg- and -Lys-|-Arg-.. It catalyses the reaction a ribonucleoside 5'-triphosphate + H2O = a ribonucleoside 5'-diphosphate + phosphate + H(+). It carries out the reaction RNA(n) + a ribonucleoside 5'-triphosphate = RNA(n+1) + diphosphate. The enzyme catalyses Selective cleavage of Gln-|-Gly bond in the poliovirus polyprotein. In other picornavirus reactions Glu may be substituted for Gln, and Ser or Thr for Gly.. In terms of biological role, autocatalytically cleaves itself from the polyprotein at the L/VP0 junction. Also cleaves the host translation initiation factors EIF4G1 and EIF4G3, in order to shut off the capped cellular mRNA transcription. Plays a role in counteracting host innate antiviral response using diverse mechanisms. Possesses a deubiquitinase activity acting on both 'Lys-48' and 'Lys-63'-linked polyubiquitin chains. In turn, inhibits the ubiquitination and subsequent activation of key signaling molecules of type I IFN response such as host RIGI, TBK1, TRAF3 and TRAF6. Inhibits host NF-kappa-B activity by inducing a decrease in RELA mRNA levels. Cleaves a peptide bond in the C-terminus of host ISG15, resulting in the damaging of this modifier that can no longer be attached to target proteins. Also cleaves host G3BP1 and G3BP2 in order to inhibit cytoplasmic stress granules assembly. Functionally, lies on the inner surface of the capsid shell. After binding to the host receptor, the capsid undergoes conformational changes. Capsid protein VP4 is released, capsid protein VP1 N-terminus is externalized, and together, they shape a pore in the host membrane through which the viral genome is translocated into the host cell cytoplasm. After genome has been released, the channel shrinks. Forms an icosahedral capsid of pseudo T=3 symmetry with capsid proteins VP1 and VP3. The capsid is composed of 60 copies of each capsid protein organized in the form of twelve pentamers and encloses the viral positive strand RNA genome. Upon acidifcation in the endosome, dissociates into pentamers. Its function is as follows. Forms an icosahedral capsid of pseudo T=3 symmetry with capsid proteins VP2 and VP3. The capsid is composed of 60 copies of each capsid protein organized in the form of twelve pentamers and encloses the viral positive strand RNA genome. Mediates cell entry by attachment to an integrin receptor, usually host ITGAV/ITGB6, via a conserved arginine-glycine-aspartic acid (R-G-D) motif. In addition, targets host MAVS to suppress type I IFN pathway. Upon acidifcation in the endosome, dissociates into pentamers. In terms of biological role, forms an icosahedral capsid of pseudo T=3 symmetry with capsid proteins VP0 and VP3. The capsid is composed of 60 copies of each capsid protein organized in the form of twelve pentamers and encloses the viral positive strand RNA genome. Upon acidifcation in the endosome, dissociates into pentamers. Functionally, mediates self-processing of the polyprotein by a translational effect termed 'ribosome skipping'. Mechanistically, 2A-mediated cleavage occurs between the C-terminal glycine and the proline of the downstream protein 2B. In the case of foot-and-mouth disease virus, the 2A oligopeptide is post-translationally 'trimmed' from the C-terminus of the upstream protein 1D by 3C proteinase. Plays an essential role in the virus replication cycle by acting as a viroporin. Creates a pore in the host endoplasmic reticulum and as a consequence releases Ca2+ in the cytoplasm of infected cell. In turn, high levels of cytoplasmic calcium may trigger membrane trafficking and transport of viral ER-associated proteins to viroplasms, sites of viral genome replication. Its function is as follows. Associates with and induces structural rearrangements of intracellular membranes. Triggers host autophagy by interacting with host BECN1 and thereby promotes viral replication. Participates in viral replication and interacts with host DHX9. Displays RNA-binding, nucleotide binding and NTPase activities. May play a role in virion morphogenesis and viral RNA encapsidation by interacting with the capsid protein VP3. In terms of biological role, plays important roles in virus replication, virulence and host range. Cooperates with host DDX56 to inhibit IRF3 nuclear translocation and subsequent type I interferon production. Functionally, covalently linked to the 5'-end of both the positive-strand and negative-strand genomic RNAs. Acts as a genome-linked replication primer. Cysteine protease that generates mature viral proteins from the precursor polyprotein. In addition to its proteolytic activity, binds to viral RNA and thus influences viral genome replication. RNA and substrate bind cooperatively to the protease. Its function is as follows. RNA-directed RNA polymerase 3D-POL replicates genomic and antigenomic RNA by recognizing replications specific signals. Covalently attaches UMP to a tyrosine of VPg, which is used to prime RNA synthesis. The positive stranded RNA genome is first replicated at virus induced membranous vesicles, creating a dsRNA genomic replication form. This dsRNA is then used as template to synthesize positive stranded RNA genomes. ss(+)RNA genomes are either translated, replicated or encapsidated. This is Genome polyprotein from Bos taurus (Bovine).